We begin with the raw amino-acid sequence, 295 residues long: Small ribosomal subunit protein bS1 (295 aa).

S1 motif domains follow at residues 28-97 (GQLV…VSLR), 115-179 (GQTV…LSER), and 193-261 (GQLI…LSTK).

The protein belongs to the bacterial ribosomal protein bS1 family.

Binds mRNA. The protein is Small ribosomal subunit protein bS1 (rpsA) of Synechococcus elongatus (strain ATCC 33912 / PCC 7942 / FACHB-805) (Anacystis nidulans R2).